Here is a 1165-residue protein sequence, read N- to C-terminus: Error-prone DNA polymerase (1165 aa).

The disordered stretch occupies residues 1111-1165 (SEGLARPPLPTGADLYEPLTYEPLNGDRRDNPDAPAQRLRHPRDVRILPPSRDFH). Residues 1152–1165 (PRDVRILPPSRDFH) show a composition bias toward basic and acidic residues.

It belongs to the DNA polymerase type-C family. DnaE2 subfamily.

The protein localises to the cytoplasm. It catalyses the reaction DNA(n) + a 2'-deoxyribonucleoside 5'-triphosphate = DNA(n+1) + diphosphate. Functionally, DNA polymerase involved in damage-induced mutagenesis and translesion synthesis (TLS). It is not the major replicative DNA polymerase. This Rhodopseudomonas palustris (strain HaA2) protein is Error-prone DNA polymerase.